A 114-amino-acid polypeptide reads, in one-letter code: Putative membrane protein insertion efficiency factor (114 aa).

It belongs to the UPF0161 family.

Its subcellular location is the cell inner membrane. In terms of biological role, could be involved in insertion of integral membrane proteins into the membrane. This is Putative membrane protein insertion efficiency factor from Nitrobacter hamburgensis (strain DSM 10229 / NCIMB 13809 / X14).